A 127-amino-acid chain; its full sequence is Transthyretin (127 aa).

Cys-10 is subject to Sulfocysteine. Lys-15 is an L-thyroxine binding site. At Glu-42 the chain carries 4-carboxyglutamate. Residue Glu-54 coordinates L-thyroxine. Asn-98 carries an N-linked (GlcNAc...) asparagine glycan. An L-thyroxine-binding site is contributed by Ser-117.

Belongs to the transthyretin family. Homotetramer. Dimer of dimers. In the homotetramer, subunits assemble around a central channel that can accommodate two ligand molecules. Interacts with RBP4. In terms of processing, sulfonation of the reactive cysteine Cys-10 enhances the stability of the native conformation of TTR, avoiding misassembly of the protein leading to amyloid formation. As to expression, detected in serum (at protein level).

It is found in the secreted. Functionally, thyroid hormone-binding protein. Probably transports thyroxine from the bloodstream to the brain. This is Transthyretin (TTR) from Oryctolagus cuniculus (Rabbit).